The sequence spans 384 residues: MAFMPPTPPKSLLGRHRLLAPSASVRVSPLCLGGMSIGNAWQGGMGECTKEMAFELLDTFYDLGGNFIDTANTYQGGESEQWIGEWMAKNNRRSEMVVSTKYTMSPKTGHPIQQSNFGGTGSKSLHLSIHNSLKALQTDYVDVLYVHCWDYATEIPELMHSLNVLINQGKVLYLGISDAPAWIVTKANMYARQNGLRPFSLYQGRYSAQERDLEREIIPMCQEEGMALQPFGVLGSGLFKSPDKPDTGARRMPPPMLIGREESLSKVLDAVAKRHNVPITSVALAYVLQKAPNVFPVLGGRKPEHLKANIEALSLELTAEDVQEIEKGYDFDIGFPHKFLGFGGMIRGPQDINILTMMGHFDYVAPKKAIRPHQGELTAPQGPA.

Asp69 is an NADP(+) binding site. Tyr74 serves as the catalytic Proton donor. NADP(+) contacts are provided by residues 177 to 178 (SD), Gln203, and 301 to 309 (RKPEHLKAN).

The protein belongs to the aldo/keto reductase family. Aldo/keto reductase 2 subfamily.

It functions in the pathway secondary metabolite biosynthesis. Its function is as follows. Aryl-alcohol dehydrogenase; part of the gene cluster that mediates the biosynthesis of dibenzodioxocinones such as pestalotiollide B, a novel class of inhibitors against cholesterol ester transfer protein (CEPT). The biosynthesis initiates from condensation of acetate and malonate units catalyzed by the non-reducing PKS pks8/GME11356. Pks8/GME11356 lacks a thioesterase (TE) domain, which is important to the cyclizing of the third ring of atrochrysone carboxylic acid, and the esterase GME11355 might play the role of TE and catalyzes the cyclization reaction of the C ring. The lactamase-like protein GME11357 (or other beta-lactamases in Pestalotiopsis microspora) probably hydrolyzes the thioester bond between the ACP of pks8/GME11356 and the intermediate to release atrochrysone carboxylic acid, which is spontaneously dehydrates to form endocrocin anthrone. Endocrocin anthrone is further converted to emodin via the endocrocin intermediate. Emodin is then oxidized by several enzymes such as the Baeyer-Villiger oxidase GME11358, the oxidoreductase GME11367, the short chain dehydrogenase/reductase GME11373, as well as by other oxidoreductases from the cluster, to modify the A and C rings and open the B ring, and finally yield monodictyphenone. The prenyltransferase GME11375 may catalyze the addition reaction between the C5 side chains and the carbon bone of dibenzodioxocinones. The remaining biochemical reactions to the final product dibenzodioxocinones should be methylation catalyzed by methyltransferase GME11366 and reduction and lactonization reaction catalyzed by a series of oxidordeuctases. In Pestalotiopsis microspora, this protein is Aryl-alcohol dehydrogenase GME11368.